The primary structure comprises 205 residues: N-(5'-phosphoribosyl)anthranilate isomerase (205 aa).

This sequence belongs to the TrpF family.

It carries out the reaction N-(5-phospho-beta-D-ribosyl)anthranilate = 1-(2-carboxyphenylamino)-1-deoxy-D-ribulose 5-phosphate. It functions in the pathway amino-acid biosynthesis; L-tryptophan biosynthesis; L-tryptophan from chorismate: step 3/5. The protein is N-(5'-phosphoribosyl)anthranilate isomerase of Trichlorobacter lovleyi (strain ATCC BAA-1151 / DSM 17278 / SZ) (Geobacter lovleyi).